The sequence spans 474 residues: Synaptotagmin-17 (474 aa).

A disordered region spans residues Trp-60–Leu-112. A compositionally biased stretch (low complexity) spans Ser-96–Leu-112. A phosphoserine mark is found at Ser-118 and Ser-119. C2 domains follow at residues Gln-184–Lys-310 and Glu-321–His-455.

This sequence belongs to the synaptotagmin family.

It localises to the membrane. Plays a role in dendrite formation by melanocytes. The sequence is that of Synaptotagmin-17 (SYT17) from Pongo abelii (Sumatran orangutan).